A 405-amino-acid polypeptide reads, in one-letter code: Caspase-1 (405 aa).

Positions M1–S91 constitute a CARD domain. Positions M1–D119 are excised as a propeptide. Residues H238 and C286 contribute to the active site. Residues S299 to D317 constitute a propeptide that is removed on maturation. At S303 the chain carries Phosphoserine.

This sequence belongs to the peptidase C14A family. As to quaternary structure, heterotetramer that consists of two anti-parallel arranged heterodimers, each one formed by a 20 kDa (Caspase-1 subunit p20) and a 10 kDa (Caspase-1 subunit p10) subunit. May be a component of the inflammasome, a protein complex which also includes PYCARD, CARD8 and NLRP2 and whose function would be the activation of pro-inflammatory caspases. Component of the AIM2 PANoptosome complex, a multiprotein complex that drives inflammatory cell death (PANoptosis). Both the p10 and p20 subunits interact with MEFV. Interacts with CARD17P/INCA and CARD18. Interacts with SERPINB1; this interaction regulates CASP1 activity. Heterotetramer that consists of two anti-parallel arranged heterodimers, each one formed by a 20 kDa (Caspase-1 subunit p20) and a 10 kDa (Caspase-1 subunit p10) subunit. The two subunits are derived from the precursor sequence by an autocatalytic mechanism. Post-translationally, ubiquitinated via 'Lys-11'-linked polyubiquitination. Deubiquitinated by USP8.

Its subcellular location is the cytoplasm. It is found in the cell membrane. It carries out the reaction Strict requirement for an Asp residue at position P1 and has a preferred cleavage sequence of Tyr-Val-Ala-Asp-|-.. Functionally, thiol protease involved in a variety of inflammatory processes by proteolytically cleaving other proteins, such as the precursors of the inflammatory cytokines interleukin-1 beta (IL1B) and interleukin 18 (IL18) as well as the pyroptosis inducer Gasdermin-D (GSDMD), into active mature peptides. Plays a key role in cell immunity as an inflammatory response initiator: once activated through formation of an inflammasome complex, it initiates a pro-inflammatory response through the cleavage of the two inflammatory cytokines IL1B and IL18, releasing the mature cytokines which are involved in a variety of inflammatory processes. Cleaves a tetrapeptide after an Asp residue at position P1. Also initiates pyroptosis, a programmed lytic cell death pathway, through cleavage of GSDMD. In contrast to cleavage of interleukin IL1B, recognition and cleavage of GSDMD is not strictly dependent on the consensus cleavage site but depends on an exosite interface on CASP1 that recognizes and binds the Gasdermin-D, C-terminal (GSDMD-CT) part. Cleaves and activates CASP7 in response to bacterial infection, promoting plasma membrane repair. Upon inflammasome activation, during DNA virus infection but not RNA virus challenge, controls antiviral immunity through the cleavage of CGAS, rendering it inactive. In apoptotic cells, cleaves SPHK2 which is released from cells and remains enzymatically active extracellularly. This is Caspase-1 (CASP1) from Equus caballus (Horse).